The primary structure comprises 187 residues: MATTNDLKNGMTLDLDGELWNVVEFQHVKPGKGPAFVRTKLKHVLTGKVVDKTFNAGVKVDVATVDKRTMQYLYREGDSFVFMDTETYDQYHIPAQTVGDAANFLLENAEAVVALHEGTPLYVELPAAVELTITYTEPGVQGDRSTGGTKPATLETGAQIQVPLFITTGEKVKVDTRTGEYLGRANS.

It belongs to the elongation factor P family.

It localises to the cytoplasm. The protein operates within protein biosynthesis; polypeptide chain elongation. In terms of biological role, involved in peptide bond synthesis. Stimulates efficient translation and peptide-bond synthesis on native or reconstituted 70S ribosomes in vitro. Probably functions indirectly by altering the affinity of the ribosome for aminoacyl-tRNA, thus increasing their reactivity as acceptors for peptidyl transferase. This is Elongation factor P from Acidothermus cellulolyticus (strain ATCC 43068 / DSM 8971 / 11B).